The primary structure comprises 505 residues: ATP synthase subunit alpha (505 aa).

169–176 (GDRKTGKT) lines the ATP pocket.

It belongs to the ATPase alpha/beta chains family. F-type ATPases have 2 components, CF(1) - the catalytic core - and CF(0) - the membrane proton channel. CF(1) has five subunits: alpha(3), beta(3), gamma(1), delta(1), epsilon(1). CF(0) has three main subunits: a(1), b(2) and c(9-12). The alpha and beta chains form an alternating ring which encloses part of the gamma chain. CF(1) is attached to CF(0) by a central stalk formed by the gamma and epsilon chains, while a peripheral stalk is formed by the delta and b chains.

Its subcellular location is the cell membrane. It carries out the reaction ATP + H2O + 4 H(+)(in) = ADP + phosphate + 5 H(+)(out). Functionally, produces ATP from ADP in the presence of a proton gradient across the membrane. The alpha chain is a regulatory subunit. The sequence is that of ATP synthase subunit alpha from Leuconostoc mesenteroides subsp. mesenteroides (strain ATCC 8293 / DSM 20343 / BCRC 11652 / CCM 1803 / JCM 6124 / NCDO 523 / NBRC 100496 / NCIMB 8023 / NCTC 12954 / NRRL B-1118 / 37Y).